Consider the following 232-residue polypeptide: 7-cyano-7-deazaguanine synthase (232 aa).

8–18 provides a ligand contact to ATP; the sequence is FSGGQDSTTCL. The Zn(2+) site is built by cysteine 189, cysteine 198, cysteine 201, and cysteine 204.

This sequence belongs to the QueC family. It depends on Zn(2+) as a cofactor.

It carries out the reaction 7-carboxy-7-deazaguanine + NH4(+) + ATP = 7-cyano-7-deazaguanine + ADP + phosphate + H2O + H(+). It functions in the pathway purine metabolism; 7-cyano-7-deazaguanine biosynthesis. Functionally, catalyzes the ATP-dependent conversion of 7-carboxy-7-deazaguanine (CDG) to 7-cyano-7-deazaguanine (preQ(0)). This Yersinia enterocolitica serotype O:8 / biotype 1B (strain NCTC 13174 / 8081) protein is 7-cyano-7-deazaguanine synthase.